The primary structure comprises 486 residues: Nuclear distribution protein PAC1 (486 aa).

Positions 66-99 (STVLRLQKKIIDLENEISNLNNIINSTNSDNNGI) form a coiled coil. WD repeat units lie at residues 119-158 (QCENIVTTVKLHPNLPLVLNGCNDGNLYIWNISNDDNTIP), 164-205 (AHTR…RTLN), 206-246 (GHEH…SLKS), 249-291 (GHSE…GVAM), 294-328 (GHSHVVETVKFLPSLQANKILDEYITKNTEQFPTI), 329-368 (PLELLKDKTYNQLGFKYCITASRDNTIKLWLIPPPTIAPH), 389-428 (GHSSWVKSLCVHPNGKFIISGSDDKTIKFWDLSGLLETGY), and 437-483 (GHDG…NSIK).

This sequence belongs to the WD repeat LIS1/nudF family. Self-associates. Interacts with NDL1 and dynein.

The protein localises to the cytoplasm. The protein resides in the cytoskeleton. It is found in the spindle pole. Its function is as follows. Positively regulates the activity of the minus-end directed microtubule motor protein dynein. Plays a central role in positioning the mitotic spindle at the bud neck during cell division. Targets cytoplasmic dynein to microtubule plus ends, thereby promoting dynein-mediated microtubule sliding along the bud cortex and consequently the movement of the mitotic spindle to the bud neck. In Candida albicans (strain SC5314 / ATCC MYA-2876) (Yeast), this protein is Nuclear distribution protein PAC1.